Reading from the N-terminus, the 428-residue chain is MTWFIDRRLNGKNKSTVNRQRFLRRYKAQIKQSISEAINKRSVTDVDSGESVSIPTDDISEPMFHQGRGGLRHRVHPGNDHFIQNDRIERPQGGGGGGSGSGQGQASQDGEGQDEFVFQISKDEYLDLLFEDLALPNLKKNQHRQLNEYKTHRAGFTSNGVPANISVVRSLQNSLARRTAMTAGKRRELHALETELETISHSEPAQLLEEERLRREIAELRTKIERVPFIDTFDLRYKNYEKRPEPSSQAVMFCLMDVSGSMDQATKDMAKRFYILLYLFLSRTYKNVEVVYIRHHTQAKEVDEHEFFYSQETGGTIVSSALKLMDEVVKERYDPGQWNIYAAQASDGDNWADDSPLCHEILAKKLLPVVRYYSYIEITRRAHQTLWREYEHLQATFDNFAMQHIRDQEDIYPVFRELFQKQSANQSA.

The span at G78–R90 shows a compositional bias: basic and acidic residues. Residues G78 to E111 form a disordered region. Gly residues predominate over residues Q92–Q103.

The protein belongs to the UPF0229 family.

This chain is UPF0229 protein YeaH, found in Salmonella choleraesuis (strain SC-B67).